Reading from the N-terminus, the 643-residue chain is Long-chain fatty acid transport protein 4 (643 aa).

Helical transmembrane passes span 20-42 (LPWT…WRFI) and 139-156 (FVGL…AALI). 243 to 254 (YIYTSGTTGLPK) lines the AMP pocket.

The protein belongs to the ATP-dependent AMP-binding enzyme family. As to expression, expressed at highest levels in brain, testis, colon and kidney. Expressed at medium levels in heart and liver, small intestine and stomach. Expressed at low levels in peripheral leukocytes, bone marrow, skeletal muscle and aorta. Expressed in adipose tissue. Expressed in brain gray matter.

It is found in the endoplasmic reticulum membrane. It carries out the reaction a fatty acid(in) = a fatty acid(out). The catalysed reaction is (9Z,12Z)-octadecadienoate(out) = (9Z,12Z)-octadecadienoate(in). The enzyme catalyses (9Z)-octadecenoate(out) = (9Z)-octadecenoate(in). It catalyses the reaction hexadecanoate(out) = hexadecanoate(in). It carries out the reaction a long-chain fatty acid + ATP + CoA = a long-chain fatty acyl-CoA + AMP + diphosphate. The catalysed reaction is hexadecanoate + ATP + CoA = hexadecanoyl-CoA + AMP + diphosphate. The enzyme catalyses (E)-hexadec-2-enoate + ATP + CoA = (2E)-hexadecenoyl-CoA + AMP + diphosphate. It catalyses the reaction (9Z)-octadecenoate + ATP + CoA = (9Z)-octadecenoyl-CoA + AMP + diphosphate. It carries out the reaction (5Z,8Z,11Z,14Z)-eicosatetraenoate + ATP + CoA = (5Z,8Z,11Z,14Z)-eicosatetraenoyl-CoA + AMP + diphosphate. The catalysed reaction is a very long-chain fatty acid + ATP + CoA = a very long-chain fatty acyl-CoA + AMP + diphosphate. The enzyme catalyses tetracosanoate + ATP + CoA = tetracosanoyl-CoA + AMP + diphosphate. Mediates the levels of long-chain fatty acids (LCFA) in the cell by facilitating their transport across cell membranes. Appears to be the principal fatty acid transporter in small intestinal enterocytes. Also functions as an acyl-CoA ligase catalyzing the ATP-dependent formation of fatty acyl-CoA using LCFA and very-long-chain fatty acids (VLCFA) as substrates, which prevents fatty acid efflux from cells and might drive more fatty acid uptake. Plays a role in the formation of the epidermal barrier. Required for fat absorption in early embryogenesis. Probably involved in fatty acid transport across the blood barrier. Indirectly inhibits RPE65 via substrate competition and via production of VLCFA derivatives like lignoceroyl-CoA. Prevents light-induced degeneration of rods and cones. In Homo sapiens (Human), this protein is Long-chain fatty acid transport protein 4.